We begin with the raw amino-acid sequence, 420 residues long: Serine/threonine-protein phosphatase 4 regulatory subunit 2-A (420 aa).

The tract at residues glycine 157–aspartate 420 is disordered. The segment covering serine 182 to serine 195 has biased composition (polar residues). Over residues threonine 196–valine 210 the composition is skewed to basic and acidic residues. The span at glutamate 212–alanine 224 shows a compositional bias: low complexity. The span at histidine 229 to lysine 250 shows a compositional bias: basic and acidic residues. Positions glutamate 251–aspartate 266 are enriched in acidic residues. The segment covering glutamate 267–histidine 276 has biased composition (basic and acidic residues). Over residues proline 278–valine 296 the composition is skewed to polar residues. Residues glycine 318–histidine 332 show a composition bias toward basic and acidic residues. A compositionally biased stretch (acidic residues) spans alanine 346–asparagine 364. A compositionally biased stretch (low complexity) spans serine 368 to glutamate 394. The segment covering glutamate 411 to aspartate 420 has biased composition (acidic residues).

The protein belongs to the PPP4R2 family. Serine/threonine-protein phosphatase 4 (PP4) occurs in different assemblies of the catalytic and one or more regulatory subunits.

Functionally, regulatory subunit of serine/threonine-protein phosphatase 4 (PP4C). In Danio rerio (Zebrafish), this protein is Serine/threonine-protein phosphatase 4 regulatory subunit 2-A (ppp4r2a).